The sequence spans 1798 residues: U3 small nucleolar RNA-associated protein 10 (1798 aa).

One copy of the HEAT 1 repeat lies at 583-620 (LDFQALLPFLLVTLTDPSERVRREAAAALAAVGSLYKK). The next 2 membrane-spanning stretches (helical) occupy residues 942-962 (IQSGMSYLLSLTLGSLLAIVN) and 998-1018 (ALLLVAGLSVIAPELVLHSVM). 4 HEAT repeats span residues 1042 to 1079 (QTIDQVVPALIQSLRDQKRDVVSGTSELLLSFTAAFEH), 1249 to 1286 (LTLVDFLDTIEVLLERPNDELRRKVLRLLEGRLRQNPE), 1293 to 1331 (IRVLDFLPTLVDIIRNSTDILLKHAAVACIDRIAEKYGK), and 1754 to 1791 (ALLPEMLPYISELMEDEDENVEREVRKWVKQIENVLGE).

Belongs to the HEATR1/UTP10 family. In terms of assembly, component of the ribosomal small subunit (SSU) processome.

It is found in the nucleus. Its subcellular location is the nucleolus. The protein localises to the membrane. In terms of biological role, involved in nucleolar processing of pre-18S ribosomal RNA. Involved in ribosome biosynthesis. The protein is U3 small nucleolar RNA-associated protein 10 of Aspergillus fumigatus (strain ATCC MYA-4609 / CBS 101355 / FGSC A1100 / Af293) (Neosartorya fumigata).